The sequence spans 210 residues: MSDEQPAEDETEEAAAESEDTQEVAANAKLFGKWDVAEIHYEDPSTRRYLAVTPVAHTMGRHAQKQFKKSEISIVERLANRLMKTGANAGKKQQALKIVRDAFDIVHERTDENPIQVLVSAVENAAPREETVRLKYGGISVPQAVDTAPQRRVDQALKFLADGAHSASFKTPTDAAEALANQLAGAADYNVQTYAIGQKKEKERVAAAAR.

Residues 1–22 (MSDEQPAEDETEEAAAESEDTQ) are compositionally biased toward acidic residues. Positions 1 to 23 (MSDEQPAEDETEEAAAESEDTQE) are disordered.

This sequence belongs to the universal ribosomal protein uS7 family. In terms of assembly, part of the 30S ribosomal subunit. Contacts proteins S9 and S11.

Its function is as follows. One of the primary rRNA binding proteins, it binds directly to 16S rRNA where it nucleates assembly of the head domain of the 30S subunit. Is located at the subunit interface close to the decoding center. The sequence is that of Small ribosomal subunit protein uS7 from Halobacterium salinarum (strain ATCC 29341 / DSM 671 / R1).